A 243-amino-acid polypeptide reads, in one-letter code: Phosphoribosyl isomerase A (243 aa).

Asp-9 serves as the catalytic Proton acceptor. Asp-128 (proton donor) is an active-site residue.

This sequence belongs to the HisA/HisF family.

The protein localises to the cytoplasm. The enzyme catalyses 1-(5-phospho-beta-D-ribosyl)-5-[(5-phospho-beta-D-ribosylamino)methylideneamino]imidazole-4-carboxamide = 5-[(5-phospho-1-deoxy-D-ribulos-1-ylimino)methylamino]-1-(5-phospho-beta-D-ribosyl)imidazole-4-carboxamide. It catalyses the reaction N-(5-phospho-beta-D-ribosyl)anthranilate = 1-(2-carboxyphenylamino)-1-deoxy-D-ribulose 5-phosphate. Its pathway is amino-acid biosynthesis; L-histidine biosynthesis; L-histidine from 5-phospho-alpha-D-ribose 1-diphosphate: step 4/9. It functions in the pathway amino-acid biosynthesis; L-tryptophan biosynthesis; L-tryptophan from chorismate: step 3/5. Involved in both the histidine and tryptophan biosynthetic pathways. This chain is Phosphoribosyl isomerase A, found in Mycobacterium avium (strain 104).